We begin with the raw amino-acid sequence, 760 residues long: H(+)/Cl(-) exchange transporter 4 (760 aa).

Over 1–67 (MVNAGAMSGS…WEFIKSLLDA (67 aa)) the chain is Cytoplasmic. Residues 14–63 (MDFLDEPFPDVGTYEDFHTIDWLREKSRDTDRHRKITSKSKESIWEFIKS) form a required for localization in the endoplasmic reticulum region. The next 2 helical transmembrane spans lie at 68–105 (WSGWVVMLLIGLLAGTLAGVIDLAVDWMTDLKEGVCLS) and 151–174 (LNYLMYILWALLFAFLAVSLVRVF). Positions 180 to 184 (GSGIP) match the Selectivity filter part_1 motif. S181 lines the chloride pocket. An intramembrane region (helical) is located at residues 183–190 (IPEIKTIL). 2 helical membrane passes run 200-218 (GKWTLLIKTVTLVLVVSSG) and 224-243 (EGPLVHVACCCGNFFSSLFS). The short motif at 222-226 (GKEGP) is the Selectivity filter part_2 element. Intramembrane regions (helical) lie at residues 255-267 (VLSAAAAAGVSVA) and 271-279 (PIGGVLFSL). 5 helical membrane-spanning segments follow: residues 291–309 (LWRSFFAALVAAFTLRSIN), 333–358 (FPFILLGVFGGLWGTLFIRCNIAWCR), 365–385 (LGKYPVLEVIVVTAITAIIAY), 442–462 (MWQLALALIFKIVVTIFTFGM), and 467–486 (GLFIPSMAVGAIAGRMVGIG). Positions 467–471 (GLFIP) match the Selectivity filter part_3 motif. F469 serves as a coordination point for chloride. 2 intramembrane regions (helical) span residues 514–528 (GLYAMVGAAACLGGV) and 532–543 (TVSLVVIMFELT). The note=Loop between two helices intramembrane region spans 544–547 (GGLE). A helical transmembrane segment spans residues 548-566 (YIVPLMAAAVTSKWVADAF). Over 567–760 (GKEGIYEAHI…NQDPESIMFN (194 aa)) the chain is Cytoplasmic. Y572 contacts chloride. A CBS 1 domain is found at 600–666 (MRPRRGEPPL…AIKNARQRQE (67 aa)). ATP is bound by residues S610 and 631-633 (YNG). Positions 667-696 (GIVSNSIMYFTEEPPELPANSPHPLKLRRI) are required for localization in the endoplasmic reticulum. In terms of domain architecture, CBS 2 spans 697 to 755 (LNLSPFTVTDHTPMETVVDIFRKLGLRQCLVTRSGRLLGIITKKDVLRHMAQMANQDPE). 738–741 (TKKD) lines the ATP pocket.

Belongs to the chloride channel (TC 2.A.49) family. ClC-4/CLCN4 subfamily. In terms of assembly, monomer. Forms heterodimers with CLCN3. Abundant in skeletal muscle and also detectable in brain and heart.

The protein localises to the early endosome membrane. Its subcellular location is the late endosome membrane. It is found in the endoplasmic reticulum membrane. It localises to the lysosome membrane. The protein resides in the recycling endosome membrane. Functionally, strongly outwardly rectifying, electrogenic H(+)/Cl(-)exchanger which mediates the exchange of chloride ions against protons. The CLC channel family contains both chloride channels and proton-coupled anion transporters that exchange chloride or another anion for protons. The presence of conserved gating glutamate residues is typical for family members that function as antiporters. The protein is H(+)/Cl(-) exchange transporter 4 (CLCN4) of Homo sapiens (Human).